The primary structure comprises 599 residues: Elongation factor 4 (599 aa).

In terms of domain architecture, tr-type G spans 2 to 184 (KNIRNFSIIA…RLVRDIPPPE (183 aa)). GTP-binding positions include 14–19 (DHGKST) and 131–134 (NKID).

This sequence belongs to the TRAFAC class translation factor GTPase superfamily. Classic translation factor GTPase family. LepA subfamily.

The protein resides in the cell inner membrane. The catalysed reaction is GTP + H2O = GDP + phosphate + H(+). In terms of biological role, required for accurate and efficient protein synthesis under certain stress conditions. May act as a fidelity factor of the translation reaction, by catalyzing a one-codon backward translocation of tRNAs on improperly translocated ribosomes. Back-translocation proceeds from a post-translocation (POST) complex to a pre-translocation (PRE) complex, thus giving elongation factor G a second chance to translocate the tRNAs correctly. Binds to ribosomes in a GTP-dependent manner. The sequence is that of Elongation factor 4 from Shigella dysenteriae serotype 1 (strain Sd197).